Here is a 411-residue protein sequence, read N- to C-terminus: Diaminobutyrate--2-oxoglutarate transaminase (411 aa).

Lysine 262 is modified (N6-(pyridoxal phosphate)lysine).

It belongs to the class-III pyridoxal-phosphate-dependent aminotransferase family. The cofactor is pyridoxal 5'-phosphate.

It catalyses the reaction L-2,4-diaminobutanoate + 2-oxoglutarate = L-aspartate 4-semialdehyde + L-glutamate. It participates in amine and polyamine biosynthesis; ectoine biosynthesis; L-ectoine from L-aspartate 4-semialdehyde: step 1/3. In terms of biological role, catalyzes reversively the conversion of L-aspartate beta-semialdehyde (ASA) to L-2,4-diaminobutyrate (DABA) by transamination with L-glutamate. In Vibrio cholerae serotype O1 (strain ATCC 39315 / El Tor Inaba N16961), this protein is Diaminobutyrate--2-oxoglutarate transaminase (ectB).